The following is a 585-amino-acid chain: Glycerol-3-phosphate acyltransferase 1 (585 aa).

The next 3 helical transmembrane spans lie at 126-146 (FFPY…AILL), 334-354 (TPLA…LAVF), and 356-376 (ISVG…MSGV). Residues 403 to 408 (HRTLLD) carry the HXXXXD motif motif.

It belongs to the GPAT/DAPAT family. Highly expressed in developing siliques and flower buds. Weakly or not expressed in roots, seedlings and leaves.

It localises to the membrane. Its subcellular location is the mitochondrion. It catalyses the reaction sn-glycerol 3-phosphate + an acyl-CoA = a 1-acyl-sn-glycero-3-phosphate + CoA. The protein operates within phospholipid metabolism; CDP-diacylglycerol biosynthesis; CDP-diacylglycerol from sn-glycerol 3-phosphate: step 1/3. In terms of biological role, esterifies acyl-group from acyl-ACP to the sn-1 position of glycerol-3-phosphate, an essential step in glycerolipid biosynthesis. Involved in pollen development, by being required for tapetum differentiation and male fertility. In addition to the sporophytic effect, it also exerts a gametophytic effect on pollen performance. This chain is Glycerol-3-phosphate acyltransferase 1 (GPAT1), found in Arabidopsis thaliana (Mouse-ear cress).